The primary structure comprises 223 residues: Ribonuclease HII (223 aa).

One can recognise an RNase H type-2 domain in the interval Leu-32–Ser-223. Asp-38, Glu-39, and Asp-130 together coordinate a divalent metal cation.

The protein belongs to the RNase HII family. It depends on Mn(2+) as a cofactor. Mg(2+) is required as a cofactor.

The protein localises to the cytoplasm. The enzyme catalyses Endonucleolytic cleavage to 5'-phosphomonoester.. Endonuclease that specifically degrades the RNA of RNA-DNA hybrids. In Bartonella henselae (strain ATCC 49882 / DSM 28221 / CCUG 30454 / Houston 1) (Rochalimaea henselae), this protein is Ribonuclease HII.